We begin with the raw amino-acid sequence, 288 residues long: Cyclin-dependent kinase 2 homolog (288 aa).

One can recognise a Protein kinase domain in the interval 4 to 284; that stretch reads YHGLEKIGEG…AKQALEHAYF (281 aa). ATP contacts are provided by residues 10–18 and Lys32; that span reads IGEGTYGVV. Phosphothreonine is present on Thr14. The residue at position 15 (Tyr15) is a Phosphotyrosine. Catalysis depends on Asp125, which acts as the Proton acceptor. Position 158 is a phosphothreonine (Thr158).

It belongs to the protein kinase superfamily. CMGC Ser/Thr protein kinase family. CDC2/CDKX subfamily. May form a complex composed of at least the catalytic subunit CRK2 and a cyclin. It depends on Mg(2+) as a cofactor. Post-translationally, autophosphorylates in presence of cyclin cyc-1 but not in presence of cyclin cyc-3.

The protein localises to the cytoplasm. The enzyme catalyses L-seryl-[protein] + ATP = O-phospho-L-seryl-[protein] + ADP + H(+). It catalyses the reaction L-threonyl-[protein] + ATP = O-phospho-L-threonyl-[protein] + ADP + H(+). It carries out the reaction [DNA-directed RNA polymerase] + ATP = phospho-[DNA-directed RNA polymerase] + ADP + H(+). With respect to regulation, phosphorylation at Thr-14 or Tyr-15 inactivates the enzyme, while phosphorylation at Thr-158 activates it. Activated by cyclin cyc-1 in vitro. Activated by cyclin cyc-3 in vitro. Serine/threonine-protein kinase. Involved in the control of the cell cycle. Required for entry into S-phase and mitosis. Probable component of the kinase complex that phosphorylates the repetitive C-terminus of RNA polymerase II. In schizonts, phosphorylates ORC1 resulting in its dissociation from DNA, relocalization to the cytoplasm and likely its degradation. The sequence is that of Cyclin-dependent kinase 2 homolog from Plasmodium falciparum (isolate 3D7).